The sequence spans 566 residues: Oxygen-dependent choline dehydrogenase (566 aa).

Residue D7 to E36 participates in FAD binding. The segment at N180 to T203 is disordered. H474 acts as the Proton acceptor in catalysis.

It belongs to the GMC oxidoreductase family. FAD is required as a cofactor.

It carries out the reaction choline + A = betaine aldehyde + AH2. It catalyses the reaction betaine aldehyde + NAD(+) + H2O = glycine betaine + NADH + 2 H(+). The protein operates within amine and polyamine biosynthesis; betaine biosynthesis via choline pathway; betaine aldehyde from choline (cytochrome c reductase route): step 1/1. In terms of biological role, involved in the biosynthesis of the osmoprotectant glycine betaine. Catalyzes the oxidation of choline to betaine aldehyde and betaine aldehyde to glycine betaine at the same rate. The polypeptide is Oxygen-dependent choline dehydrogenase (Burkholderia ambifaria (strain MC40-6)).